A 609-amino-acid polypeptide reads, in one-letter code: Chloride channel CLIC-like protein 1 (609 aa).

Positions 1–25 (MKLSSSSSFGLCILVVFFCFVVIES) are cleaved as a signal peptide. Helical transmembrane passes span 212–235 (VSLI…SWFV), 241–260 (FAVS…YMLA), and 358–380 (VTLQ…YGSA). Residues 398 to 553 (EQPPPAVGQR…PSSIDVKTVG (156 aa)) form a disordered region. Basic and acidic residues-rich tracts occupy residues 454-474 (ENRE…KRTP) and 507-537 (EEVK…DRSE). Over residues 538–547 (PITSEPPSSI) the composition is skewed to low complexity.

It belongs to the chloride channel MCLC family. As to expression, expressed in the hindbrain, swim bladder and the eye at 1 day post fertilization (dpf) with increased expression at 3 dpf. At 3 dpf, most prominent expression in the retina, with strong expression in the ganglion cell layer, outer nuclear layer and the retinal pigmented epithelium.

The protein resides in the endoplasmic reticulum membrane. It is found in the golgi apparatus membrane. The protein localises to the nucleus membrane. Its function is as follows. Seems to act as a chloride ion channel. Plays a role in retina development. This Danio rerio (Zebrafish) protein is Chloride channel CLIC-like protein 1.